The following is a 382-amino-acid chain: Lipid-A-disaccharide synthase (382 aa).

This sequence belongs to the LpxB family.

It catalyses the reaction 2-N,3-O-bis[(3R)-3-hydroxytetradecanoyl]-alpha-D-glucosaminyl 1-phosphate + UDP-2-N,3-O-bis[(3R)-3-hydroxytetradecanoyl]-alpha-D-glucosamine = lipid A disaccharide (E. coli) + UDP + H(+). It carries out the reaction a lipid X + a UDP-2-N,3-O-bis[(3R)-3-hydroxyacyl]-alpha-D-glucosamine = a lipid A disaccharide + UDP + H(+). It functions in the pathway glycolipid biosynthesis; lipid IV(A) biosynthesis; lipid IV(A) from (3R)-3-hydroxytetradecanoyl-[acyl-carrier-protein] and UDP-N-acetyl-alpha-D-glucosamine: step 5/6. Condensation of UDP-2,3-diacylglucosamine and 2,3-diacylglucosamine-1-phosphate to form lipid A disaccharide, a precursor of lipid A, a phosphorylated glycolipid that anchors the lipopolysaccharide to the outer membrane of the cell. The polypeptide is Lipid-A-disaccharide synthase (Escherichia coli (strain K12 / MC4100 / BW2952)).